The following is a 131-amino-acid chain: Small ribosomal subunit protein uS8 (131 aa).

The tract at residues 1-27 (MSMTDPVADMLTRIRNGQRASKNEVSM) is disordered.

The protein belongs to the universal ribosomal protein uS8 family. Part of the 30S ribosomal subunit. Contacts proteins S5 and S12.

Functionally, one of the primary rRNA binding proteins, it binds directly to 16S rRNA central domain where it helps coordinate assembly of the platform of the 30S subunit. This Thioalkalivibrio sulfidiphilus (strain HL-EbGR7) protein is Small ribosomal subunit protein uS8.